Consider the following 182-residue polypeptide: Probable inosine/xanthosine triphosphatase (182 aa).

Glu-65 is a Mg(2+) binding site. 65–66 (EA) is a substrate binding site.

Belongs to the YjjX NTPase family. As to quaternary structure, homodimer. The cofactor is Mg(2+). It depends on Mn(2+) as a cofactor.

It catalyses the reaction XTP + H2O = XDP + phosphate + H(+). The enzyme catalyses ITP + H2O = IDP + phosphate + H(+). Phosphatase that hydrolyzes non-canonical purine nucleotides such as XTP and ITP to their respective diphosphate derivatives. Probably excludes non-canonical purines from DNA/RNA precursor pool, thus preventing their incorporation into DNA/RNA and avoiding chromosomal lesions. In Pyrobaculum neutrophilum (strain DSM 2338 / JCM 9278 / NBRC 100436 / V24Sta) (Thermoproteus neutrophilus), this protein is Probable inosine/xanthosine triphosphatase.